The sequence spans 158 residues: GAF domain-containing protein A (158 aa).

The GAF domain maps to 32-158; sequence NQIANLANVT…LTQILKLLDN (127 aa).

The protein belongs to the free Met sulfoxide reductase family.

In Dictyostelium discoideum (Social amoeba), this protein is GAF domain-containing protein A (gafA).